Consider the following 123-residue polypeptide: NADH-quinone oxidoreductase subunit A (123 aa).

Helical transmembrane passes span leucine 6 to isoleucine 26, valine 66 to valine 86, and tryptophan 93 to isoleucine 113.

Belongs to the complex I subunit 3 family. As to quaternary structure, NDH-1 is composed of 14 different subunits. Subunits NuoA, H, J, K, L, M, N constitute the membrane sector of the complex.

The protein resides in the cell inner membrane. The catalysed reaction is a quinone + NADH + 5 H(+)(in) = a quinol + NAD(+) + 4 H(+)(out). Functionally, NDH-1 shuttles electrons from NADH, via FMN and iron-sulfur (Fe-S) centers, to quinones in the respiratory chain. The immediate electron acceptor for the enzyme in this species is believed to be ubiquinone. Couples the redox reaction to proton translocation (for every two electrons transferred, four hydrogen ions are translocated across the cytoplasmic membrane), and thus conserves the redox energy in a proton gradient. This is NADH-quinone oxidoreductase subunit A from Myxococcus xanthus (strain DK1622).